We begin with the raw amino-acid sequence, 122 residues long: MIQTQTVLDVADNSGARRVMCIKVLGGSHRRYASIGDVIKVSVKEAIPRGKVKKGQVLKAVVVRTRKGVRRQDGSLIRFDGNAAVLLNNQEQPIGTRIFGPVTRELRGEKFMKIISLAPEVL.

The protein belongs to the universal ribosomal protein uL14 family. In terms of assembly, part of the 50S ribosomal subunit. Forms a cluster with proteins L3 and L19. In the 70S ribosome, L14 and L19 interact and together make contacts with the 16S rRNA in bridges B5 and B8.

Binds to 23S rRNA. Forms part of two intersubunit bridges in the 70S ribosome. The polypeptide is Large ribosomal subunit protein uL14 (Hahella chejuensis (strain KCTC 2396)).